The chain runs to 663 residues: GPI mannosyltransferase 3 (663 aa).

A compositionally biased stretch (basic residues) spans 1-11; the sequence is MPMSARSRRSN. Residues 1-44 form a disordered region; it reads MPMSARSRRSNPRLPPSPSSSSSSDAVRASPHSSPPSRLRPPSA. A compositionally biased stretch (low complexity) spans 19 to 42; the sequence is SSSSSSDAVRASPHSSPPSRLRPP. 8 helical membrane passes run 47-67, 110-130, 137-157, 226-246, 269-289, 304-324, 335-355, and 367-387; these read DVSS…ALTV, PLIF…LGLT, LLIA…DFYT, VLAV…FPPL, YASQ…LVGL, GSIL…LSVI, LLPA…IPAL, and LTLI…TLFH. The interval 492 to 512 is disordered; sequence HIPRRPSYATPPSSQRQPTQL. The segment covering 501 to 511 has biased composition (polar residues); that stretch reads TPPSSQRQPTQ.

It belongs to the glycosyltransferase 22 family. PIGB subfamily.

It localises to the endoplasmic reticulum membrane. It participates in glycolipid biosynthesis; glycosylphosphatidylinositol-anchor biosynthesis. Functionally, mannosyltransferase involved in glycosylphosphatidylinositol-anchor biosynthesis. Transfers the third mannose to Man2-GlcN-acyl-PI during GPI precursor assembly. The protein is GPI mannosyltransferase 3 (gpi10) of Emericella nidulans (strain FGSC A4 / ATCC 38163 / CBS 112.46 / NRRL 194 / M139) (Aspergillus nidulans).